A 646-amino-acid chain; its full sequence is ATP-dependent zinc metalloprotease FtsH (646 aa).

Residues 1 to 4 (MTRS) lie on the Cytoplasmic side of the membrane. Residues 5-25 (LLWQMVIVLGAILMVNYVLTT) traverse the membrane as a helical segment. Over 26–120 (LTPQTQEPVV…VRPESKPSPW (95 aa)) the chain is Periplasmic. A helical transmembrane segment spans residues 121-141 (ATAMIYMLPWLLIVGVWWFVI). At 142-646 (KGMRTRQGPG…GELAGGAVEG (505 aa)) the chain is on the cytoplasmic side. 216–223 (GPPGTGKT) contacts ATP. His437 is a Zn(2+) binding site. Residue Glu438 is part of the active site. The Zn(2+) site is built by His441 and Asp513.

The protein in the central section; belongs to the AAA ATPase family. In the C-terminal section; belongs to the peptidase M41 family. Homohexamer. Zn(2+) serves as cofactor.

The protein localises to the cell inner membrane. In terms of biological role, acts as a processive, ATP-dependent zinc metallopeptidase for both cytoplasmic and membrane proteins. Plays a role in the quality control of integral membrane proteins. The sequence is that of ATP-dependent zinc metalloprotease FtsH from Syntrophotalea carbinolica (strain DSM 2380 / NBRC 103641 / GraBd1) (Pelobacter carbinolicus).